We begin with the raw amino-acid sequence, 326 residues long: Glycerol-3-phosphate dehydrogenase [NAD(P)+] (326 aa).

The NADPH site is built by Trp13, Arg33, and Lys107. Sn-glycerol 3-phosphate is bound by residues Lys107, Gly135, and Ser137. Position 139 (Ala139) interacts with NADPH. 5 residues coordinate sn-glycerol 3-phosphate: Lys190, Asp243, Ser253, Arg254, and Asn255. Catalysis depends on Lys190, which acts as the Proton acceptor. Arg254 contributes to the NADPH binding site. Residues Leu273 and Glu275 each coordinate NADPH.

This sequence belongs to the NAD-dependent glycerol-3-phosphate dehydrogenase family.

It localises to the cytoplasm. The enzyme catalyses sn-glycerol 3-phosphate + NAD(+) = dihydroxyacetone phosphate + NADH + H(+). It carries out the reaction sn-glycerol 3-phosphate + NADP(+) = dihydroxyacetone phosphate + NADPH + H(+). It functions in the pathway membrane lipid metabolism; glycerophospholipid metabolism. Functionally, catalyzes the reduction of the glycolytic intermediate dihydroxyacetone phosphate (DHAP) to sn-glycerol 3-phosphate (G3P), the key precursor for phospholipid synthesis. This is Glycerol-3-phosphate dehydrogenase [NAD(P)+] from Brucella abortus (strain 2308).